The following is a 209-amino-acid chain: Uridine kinase (209 aa).

12-19 (GGTGSGKS) lines the ATP pocket.

It belongs to the uridine kinase family.

The protein resides in the cytoplasm. It catalyses the reaction uridine + ATP = UMP + ADP + H(+). It carries out the reaction cytidine + ATP = CMP + ADP + H(+). It functions in the pathway pyrimidine metabolism; CTP biosynthesis via salvage pathway; CTP from cytidine: step 1/3. The protein operates within pyrimidine metabolism; UMP biosynthesis via salvage pathway; UMP from uridine: step 1/1. This Clostridium tetani (strain Massachusetts / E88) protein is Uridine kinase.